Here is a 525-residue protein sequence, read N- to C-terminus: Glutamyl-tRNA(Gln) amidotransferase subunit A, mitochondrial (525 aa).

Catalysis depends on charge relay system residues Lys-76 and Ser-168. Ser-192 serves as the catalytic Acyl-ester intermediate.

This sequence belongs to the amidase family. GatA subfamily. In terms of assembly, subunit of the heterotrimeric GatCAB amidotransferase (AdT) complex, composed of A (QRSL1), B (GATB) and C (GATC) subunits.

Its subcellular location is the mitochondrion. The enzyme catalyses L-glutamyl-tRNA(Gln) + L-glutamine + ATP + H2O = L-glutaminyl-tRNA(Gln) + L-glutamate + ADP + phosphate + H(+). Its function is as follows. Allows the formation of correctly charged Gln-tRNA(Gln) through the transamidation of misacylated Glu-tRNA(Gln) in the mitochondria. The reaction takes place in the presence of glutamine and ATP through an activated gamma-phospho-Glu-tRNA(Gln). In Mus musculus (Mouse), this protein is Glutamyl-tRNA(Gln) amidotransferase subunit A, mitochondrial (Qrsl1).